Reading from the N-terminus, the 383-residue chain is Acetylornithine deacetylase (383 aa).

H80 lines the Zn(2+) pocket. D82 is a catalytic residue. D112 contributes to the Zn(2+) binding site. E144 is a catalytic residue. 3 residues coordinate Zn(2+): E145, E169, and H355.

The protein belongs to the peptidase M20A family. ArgE subfamily. As to quaternary structure, homodimer. Zn(2+) is required as a cofactor. It depends on Co(2+) as a cofactor. The cofactor is glutathione.

It localises to the cytoplasm. It carries out the reaction N(2)-acetyl-L-ornithine + H2O = L-ornithine + acetate. Its pathway is amino-acid biosynthesis; L-arginine biosynthesis; L-ornithine from N(2)-acetyl-L-ornithine (linear): step 1/1. Catalyzes the hydrolysis of the amide bond of N(2)-acetylated L-amino acids. Cleaves the acetyl group from N-acetyl-L-ornithine to form L-ornithine, an intermediate in L-arginine biosynthesis pathway, and a branchpoint in the synthesis of polyamines. The chain is Acetylornithine deacetylase from Escherichia coli O7:K1 (strain IAI39 / ExPEC).